The sequence spans 139 residues: Large ribosomal subunit protein bL17 (139 aa).

Residues Asp-117–Gly-139 are disordered.

The protein belongs to the bacterial ribosomal protein bL17 family. Part of the 50S ribosomal subunit. Contacts protein L32.

The chain is Large ribosomal subunit protein bL17 from Rhodospirillum centenum (strain ATCC 51521 / SW).